A 66-amino-acid chain; its full sequence is uncharacterized protein (66 aa).

A run of 2 helical transmembrane segments spans residues 5 to 25 (ALIV…PLVN) and 30 to 50 (IMFG…VTPL).

It is found in the cell membrane. This is an uncharacterized protein from Bacillus subtilis (strain 168).